The following is a 203-amino-acid chain: Serine hydrolase-like protein (203 aa).

Residues 33 to 145 (PPVLCLHGWL…FLLESDEMEN (113 aa)) form the AB hydrolase-1 domain. Residue S108 is part of the active site.

Belongs to the AB hydrolase superfamily.

Functionally, putative serine hydrolase. The polypeptide is Serine hydrolase-like protein (SERHL) (Homo sapiens (Human)).